Consider the following 373-residue polypeptide: Cobalt-precorrin-5B C(1)-methyltransferase (373 aa).

This sequence belongs to the CbiD family.

It carries out the reaction Co-precorrin-5B + S-adenosyl-L-methionine = Co-precorrin-6A + S-adenosyl-L-homocysteine. It functions in the pathway cofactor biosynthesis; adenosylcobalamin biosynthesis; cob(II)yrinate a,c-diamide from sirohydrochlorin (anaerobic route): step 6/10. In terms of biological role, catalyzes the methylation of C-1 in cobalt-precorrin-5B to form cobalt-precorrin-6A. This Listeria monocytogenes serotype 4a (strain HCC23) protein is Cobalt-precorrin-5B C(1)-methyltransferase.